The chain runs to 436 residues: Trigger factor (436 aa).

One can recognise a PPIase FKBP-type domain in the interval 163–248 (GDQVIIDFVG…VHSVQTKVLP (86 aa)).

It belongs to the FKBP-type PPIase family. Tig subfamily.

Its subcellular location is the cytoplasm. It carries out the reaction [protein]-peptidylproline (omega=180) = [protein]-peptidylproline (omega=0). Its function is as follows. Involved in protein export. Acts as a chaperone by maintaining the newly synthesized protein in an open conformation. Functions as a peptidyl-prolyl cis-trans isomerase. The chain is Trigger factor from Hydrogenovibrio crunogenus (strain DSM 25203 / XCL-2) (Thiomicrospira crunogena).